A 341-amino-acid chain; its full sequence is Tryptophan--tRNA ligase (341 aa).

Residues 11-13 (RPT) and 19-20 (GH) each bind ATP. The 'HIGH' region motif lies at 12 to 20 (PTGKLHIGH). Asp140 is an L-tryptophan binding site. ATP is bound by residues 152–154 (GND), Leu194, and 202–206 (KMSKS). Positions 202–206 (KMSKS) match the 'KMSKS' region motif.

This sequence belongs to the class-I aminoacyl-tRNA synthetase family. In terms of assembly, homodimer.

Its subcellular location is the cytoplasm. The catalysed reaction is tRNA(Trp) + L-tryptophan + ATP = L-tryptophyl-tRNA(Trp) + AMP + diphosphate + H(+). Functionally, catalyzes the attachment of tryptophan to tRNA(Trp). The protein is Tryptophan--tRNA ligase of Lactococcus lactis subsp. lactis (strain IL1403) (Streptococcus lactis).